The chain runs to 296 residues: Sulfotransferase 1C2 (296 aa).

Residue 49–54 (KSGTTW) participates in 3'-phosphoadenylyl sulfate binding. 107–109 (RTH) provides a ligand contact to substrate. Catalysis depends on H109, which acts as the Proton acceptor. Residues R131, S139, Y194, and 228–233 (TSFEKM) contribute to the 3'-phosphoadenylyl sulfate site. S139 is modified (phosphoserine). A Phosphoserine modification is found at S254. A 3'-phosphoadenylyl sulfate-binding site is contributed by 256–260 (FMRKG).

It belongs to the sulfotransferase 1 family. As to expression, found in gastrointestinal tract tissues, liver and kidney.

The protein localises to the cytoplasm. Its subcellular location is the lysosome. It localises to the mitochondrion. The enzyme catalyses a phenol + 3'-phosphoadenylyl sulfate = an aryl sulfate + adenosine 3',5'-bisphosphate + H(+). It carries out the reaction cholesterol + 3'-phosphoadenylyl sulfate = cholesterol sulfate + adenosine 3',5'-bisphosphate + H(+). Functionally, sulfotransferase that utilizes 3'-phospho-5'-adenylyl sulfate (PAPS) to catalyze the sulfate conjugation of phenolic compounds. Does not transfer sulfate to steroids, dopamine, acetaminophen, or alpha-naphthol. Except in mitochondria, where it can add sulfate to cholesterol producing cholesterol sulfate, which alters mitochondrial membrane organization, and impacts protein complex mobility increasing state-III respiration, thereby modulating mitochondrial respiration. Catalyzes the sulfation of the carcinogenic N-hydroxy-2-acetylaminofluorene leading to highly reactive intermediates capable of forming DNA adducts, potentially resulting in mutagenesis. In Oryctolagus cuniculus (Rabbit), this protein is Sulfotransferase 1C2 (SULT1C2).